The following is a 536-amino-acid chain: Phosphoenolpyruvate carboxykinase (ATP) (536 aa).

Substrate-binding residues include R61, Y195, and K201. Residues K201, H220, and G236–T244 contribute to the ATP site. Mn(2+) contacts are provided by K201 and H220. D257 provides a ligand contact to Mn(2+). Residues E285, R322, and T447 each contribute to the ATP site. A substrate-binding site is contributed by R322.

The protein belongs to the phosphoenolpyruvate carboxykinase (ATP) family. Mn(2+) is required as a cofactor.

The protein resides in the cytoplasm. It catalyses the reaction oxaloacetate + ATP = phosphoenolpyruvate + ADP + CO2. The protein operates within carbohydrate biosynthesis; gluconeogenesis. Involved in the gluconeogenesis. Catalyzes the conversion of oxaloacetate (OAA) to phosphoenolpyruvate (PEP) through direct phosphoryl transfer between the nucleoside triphosphate and OAA. The sequence is that of Phosphoenolpyruvate carboxykinase (ATP) from Allorhizobium ampelinum (strain ATCC BAA-846 / DSM 112012 / S4) (Agrobacterium vitis (strain S4)).